Here is a 209-residue protein sequence, read N- to C-terminus: Large ribosomal subunit protein bL25 (209 aa).

The segment at 188–209 (STSMEKEGEGSQEPTAAPSSEN) is disordered. Polar residues predominate over residues 199–209 (QEPTAAPSSEN).

It belongs to the bacterial ribosomal protein bL25 family. CTC subfamily. In terms of assembly, part of the 50S ribosomal subunit; part of the 5S rRNA/L5/L18/L25 subcomplex. Contacts the 5S rRNA. Binds to the 5S rRNA independently of L5 and L18.

Functionally, this is one of the proteins that binds to the 5S RNA in the ribosome where it forms part of the central protuberance. The chain is Large ribosomal subunit protein bL25 from Ehrlichia canis (strain Jake).